The following is a 1328-amino-acid chain: ATP-dependent DNA helicase hus2/rqh1 (1328 aa).

2 stretches are compositionally biased toward low complexity: residues 217-236 (NNLP…NDNN) and 244-254 (ASPTPSSVSSQ). A disordered region spans residues 217-254 (NNLPFPRLNNNNTNNNNDNNAIEKRDSASPTPSSVSSQ). Residues 528–707 (INGTLSGKDV…INTLRMENCL (180 aa)) enclose the Helicase ATP-binding domain. 555–562 (AVIEGGAS) contacts ATP. Residues 651 to 654 (DEAH) carry the DEAH box motif. One can recognise a Helicase C-terminal domain in the interval 728-876 (LYTELYRFIS…ETKERQRQML (149 aa)). An HRDC domain is found at 1115–1195 (IDVMTRCLKD…QKFIDEKEQN (81 aa)). Disordered regions lie at residues 1224-1247 (EQGF…GDEE) and 1260-1328 (NSQS…QNYR). The segment covering 1260–1269 (NSQSLTQTGS) has biased composition (polar residues). A compositionally biased stretch (basic residues) spans 1283–1300 (KSYRHKRGSTSYSRKRKY).

It belongs to the helicase family. RecQ subfamily. Interacts with top3.

The protein resides in the nucleus. The enzyme catalyses Couples ATP hydrolysis with the unwinding of duplex DNA by translocating in the 3'-5' direction.. It carries out the reaction ATP + H2O = ADP + phosphate + H(+). ATP-dependent 3'-5' DNA-helicase. Has a role in the repair of UV-induced DNA damage in G2 via recombination-mediated repair. Also has a role in the repair of infrared-induced double DNA strand breaks. This is ATP-dependent DNA helicase hus2/rqh1 from Schizosaccharomyces pombe (strain 972 / ATCC 24843) (Fission yeast).